Consider the following 1613-residue polypeptide: Vitellogenin-2 (1613 aa).

A signal peptide spans 1 to 15; that stretch reads MRSIIIASLVALALA. One can recognise a Vitellogenin domain in the interval 24–687; that stretch reads FEPKTDYHYK…EKNSFLPKDL (664 aa). N-linked (GlcNAc...) asparagine glycosylation is present at Asn-1268. Residues 1308-1477 form the VWFD domain; that stretch reads SVCKVQKNQI…SYLLKNEECE (170 aa). 2 disulfides stabilise this stretch: Cys-1310–Cys-1440 and Cys-1332–Cys-1476. The disordered stretch occupies residues 1491 to 1531; the sequence is KYERDEEQSDEYSSEETYDYEQENTKKSQKNQRSQKKSDLV. Acidic residues predominate over residues 1495–1512; it reads DEEQSDEYSSEETYDYEQ.

In terms of tissue distribution, expressed in the intestine of adult hermaphrodites.

It localises to the secreted. In terms of biological role, precursor of the egg-yolk proteins that are sources of nutrients during embryonic development. Together with other vitellogenins, may play a role in modulating life-span, acting via induction of autophagy and lysosomal lipolysis. The sequence is that of Vitellogenin-2 (vit-2) from Caenorhabditis elegans.